Here is a 199-residue protein sequence, read N- to C-terminus: Molybdenum cofactor guanylyltransferase (199 aa).

GTP contacts are provided by residues 12 to 14 (LAG), K25, N53, D71, and D101. Position 101 (D101) interacts with Mg(2+).

The protein belongs to the MobA family. In terms of assembly, monomer. It depends on Mg(2+) as a cofactor.

The protein localises to the cytoplasm. The catalysed reaction is Mo-molybdopterin + GTP + H(+) = Mo-molybdopterin guanine dinucleotide + diphosphate. Transfers a GMP moiety from GTP to Mo-molybdopterin (Mo-MPT) cofactor (Moco or molybdenum cofactor) to form Mo-molybdopterin guanine dinucleotide (Mo-MGD) cofactor. The polypeptide is Molybdenum cofactor guanylyltransferase (Polynucleobacter asymbioticus (strain DSM 18221 / CIP 109841 / QLW-P1DMWA-1) (Polynucleobacter necessarius subsp. asymbioticus)).